The following is a 473-amino-acid chain: Bifunctional protein HldE (473 aa).

The ribokinase stretch occupies residues 1-317 (MTHGLPHFTS…LQQALHPRAI (317 aa)). 195-198 (NLAE) lines the ATP pocket. Residue Asp264 is part of the active site. The segment at 343 to 473 (MTNGCFDILH…SQIIDIIRKN (131 aa)) is cytidylyltransferase.

This sequence in the N-terminal section; belongs to the carbohydrate kinase PfkB family. The protein in the C-terminal section; belongs to the cytidylyltransferase family. Homodimer.

It catalyses the reaction D-glycero-beta-D-manno-heptose 7-phosphate + ATP = D-glycero-beta-D-manno-heptose 1,7-bisphosphate + ADP + H(+). It carries out the reaction D-glycero-beta-D-manno-heptose 1-phosphate + ATP + H(+) = ADP-D-glycero-beta-D-manno-heptose + diphosphate. It participates in nucleotide-sugar biosynthesis; ADP-L-glycero-beta-D-manno-heptose biosynthesis; ADP-L-glycero-beta-D-manno-heptose from D-glycero-beta-D-manno-heptose 7-phosphate: step 1/4. Its pathway is nucleotide-sugar biosynthesis; ADP-L-glycero-beta-D-manno-heptose biosynthesis; ADP-L-glycero-beta-D-manno-heptose from D-glycero-beta-D-manno-heptose 7-phosphate: step 3/4. Functionally, catalyzes the phosphorylation of D-glycero-D-manno-heptose 7-phosphate at the C-1 position to selectively form D-glycero-beta-D-manno-heptose-1,7-bisphosphate. Catalyzes the ADP transfer from ATP to D-glycero-beta-D-manno-heptose 1-phosphate, yielding ADP-D-glycero-beta-D-manno-heptose. This is Bifunctional protein HldE from Nitrosococcus oceani (strain ATCC 19707 / BCRC 17464 / JCM 30415 / NCIMB 11848 / C-107).